Here is a 206-residue protein sequence, read N- to C-terminus: Homoserine/homoserine lactone efflux protein (206 aa).

The next 6 membrane-spanning stretches (helical) occupy residues 5–25 (WWFA…SGAI), 45–65 (GLQT…GTLF), 68–88 (SLIA…WLGI), 117–137 (FVNL…PQFI), 148–168 (LILG…YATL), and 182–202 (MKAL…LLAS).

This sequence belongs to the Rht family.

It is found in the cell membrane. In terms of biological role, conducts the efflux of homoserine and homoserine lactone. This chain is Homoserine/homoserine lactone efflux protein (rhtB), found in Salmonella typhi.